Consider the following 126-residue polypeptide: Glycine cleavage system H protein (126 aa).

Residues 19 to 100 (DGKIGITDHA…AHAAWMVKVE (82 aa)) form the Lipoyl-binding domain. K60 is modified (N6-lipoyllysine).

It belongs to the GcvH family. As to quaternary structure, the glycine cleavage system is composed of four proteins: P, T, L and H. Requires (R)-lipoate as cofactor.

The glycine cleavage system catalyzes the degradation of glycine. The H protein shuttles the methylamine group of glycine from the P protein to the T protein. The polypeptide is Glycine cleavage system H protein (Koribacter versatilis (strain Ellin345)).